We begin with the raw amino-acid sequence, 494 residues long: MGRKKKKQLKPWCWYCNRDFDDEKILTQHQKAKHFKCHICHKKLYTGPGLAIHCMQVHKETIDAVPNAIPGRTDIELEIYGMEGIPEKDMDEGRRLLEQKTQESQKKKQQDDSDEYDDDDSAASTSFQPQPVQPQQGYIPPMAQPGLPPVPGAPGMPPGIPPLMPGVPPLMPGMPPVMPGMPPGLHHQRKYTQSFCGENIMMPMGGMMPPGPGIPPLMPGMPPGMPPPVPRPGIPPMTQAQAVSAPGILNRPPAPTATVPAPQPPVTKPLFPSAGQMGTPVTSSSTASSNSESLSASSKAPFPSTAQAQVAVQGPVGTDFKPLNSTPATSTEPPKPTFPAYTQSTASTTSTTNSTAAKPAASITSKPATLTTTSATSKLIHPDEDISLEERRAQLPKYQRNLPRPGQAPIGNPPVGPIGGMMPPQPGIPQQQGMRPPMPPHGQYGGHHQGMPGYLPGAMPPYGQGPPMVPPYQGGPPRPPMGMRPPVMSQGGRY.

Residues 1–92 (MGRKKKKQLK…EGIPEKDMDE (92 aa)) are microtubule-binding region. C2H2-type zinc fingers lie at residues 11–34 (PWCW…KAKH) and 35–58 (FKCH…MQVH). Residues 100 to 111 (KTQESQKKKQQD) show a composition bias toward basic and acidic residues. Disordered stretches follow at residues 100–161 (KTQE…PGIP), 250–377 (NRPP…SATS), and 455–494 (LPGA…GGRY). Positions 112–121 (DSDEYDDDDS) are enriched in acidic residues. Residues 127 to 136 (FQPQPVQPQQ) show a composition bias toward polar residues. The span at 142-161 (MAQPGLPPVPGAPGMPPGIP) shows a compositional bias: pro residues. Residues 283–300 (SSSTASSNSESLSASSKA) show a composition bias toward low complexity. Residues 323-332 (LNSTPATSTE) are compositionally biased toward polar residues. Positions 342 to 377 (TQSTASTTSTTNSTAAKPAASITSKPATLTTTSATS) are enriched in low complexity. Residues 375–407 (ATSKLIHPDEDISLEERRAQLPKYQRNLPRPGQ) form a GLEBS region. Over residues 463-483 (GQGPPMVPPYQGGPPRPPMGM) the composition is skewed to pro residues.

In terms of assembly, interacts (via GLEBS region) with BUB3.

It is found in the nucleus. It localises to the chromosome. Its subcellular location is the centromere. The protein resides in the kinetochore. The protein localises to the cytoplasm. It is found in the cytoskeleton. It localises to the spindle. Its function is as follows. Kinetochore- and microtubule-binding protein that plays a key role in spindle assembly. ZNF207/BuGZ is mainly composed of disordered low-complexity regions and undergoes phase transition or coacervation to form temperature-dependent liquid droplets. Coacervation promotes microtubule bundling and concentrates tubulin, promoting microtubule polymerization and assembly of spindle and spindle matrix by concentrating its building blocks. Also acts as a regulator of mitotic chromosome alignment by mediating the stability and kinetochore loading of BUB3. Mechanisms by which BUB3 is protected are unclear: according to a first report, ZNF207/BuGZ may act by blocking ubiquitination and proteasomal degradation of BUB3. According to another report, the stabilization is independent of the proteasome. The chain is BUB3-interacting and GLEBS motif-containing protein ZNF207 from Pongo abelii (Sumatran orangutan).